The sequence spans 842 residues: Protein P (842 aa).

Residues 1 to 177 are terminal protein domain (TP); the sequence is MPLSYQHFRR…FCGSPYSWEQ (177 aa). Residues 178–345 are spacer; that stretch reads ELHHGAFLDG…YCLSHLVNLL (168 aa). A disordered region spans residues 186 to 273; that stretch reads DGPSRMGEES…AKNIASRSAS (88 aa). A compositionally biased stretch (polar residues) spans 223 to 239; it reads GPQSQQRPLDRSQQGRS. Residues 346 to 689 are polymerase/reverse transcriptase domain (RT); sequence EDWGPCTEHG…YLNLYPVARQ (344 aa). The Reverse transcriptase domain maps to 356–599; it reads RHHIRIPRTP…YSLNFMGYVI (244 aa). Mg(2+) contacts are provided by Asp428, Asp550, and Asp551.

The protein belongs to the hepadnaviridae P protein family.

The catalysed reaction is DNA(n) + a 2'-deoxyribonucleoside 5'-triphosphate = DNA(n+1) + diphosphate. It catalyses the reaction Endonucleolytic cleavage to 5'-phosphomonoester.. Activated by host HSP70 and HSP40 in vitro to be able to bind the epsilon loop of the pgRNA. Because deletion of the RNase H region renders the protein partly chaperone-independent, the chaperones may be needed indirectly to relieve occlusion of the RNA-binding site by this domain. Inhibited by several reverse-transcriptase inhibitors: Lamivudine, Adefovir and Entecavir. Functionally, multifunctional enzyme that converts the viral RNA genome into dsDNA in viral cytoplasmic capsids. This enzyme displays a DNA polymerase activity that can copy either DNA or RNA templates, and a ribonuclease H (RNase H) activity that cleaves the RNA strand of RNA-DNA heteroduplexes in a partially processive 3'- to 5'-endonucleasic mode. Neo-synthesized pregenomic RNA (pgRNA) are encapsidated together with the P protein, and reverse-transcribed inside the nucleocapsid. Initiation of reverse-transcription occurs first by binding the epsilon loop on the pgRNA genome, and is initiated by protein priming, thereby the 5'-end of (-)DNA is covalently linked to P protein. Partial (+)DNA is synthesized from the (-)DNA template and generates the relaxed circular DNA (RC-DNA) genome. After budding and infection, the RC-DNA migrates in the nucleus, and is converted into a plasmid-like covalently closed circular DNA (cccDNA). The activity of P protein does not seem to be necessary for cccDNA generation, and is presumably released from (+)DNA by host nuclear DNA repair machinery. The chain is Protein P from Homo sapiens (Human).